We begin with the raw amino-acid sequence, 401 residues long: uncharacterized protein (401 aa).

Lysine 242 bears the N6-(pyridoxal phosphate)lysine mark.

Belongs to the class-I pyridoxal-phosphate-dependent aminotransferase family. As to quaternary structure, homodimer. Pyridoxal 5'-phosphate serves as cofactor.

The protein resides in the cytoplasm. This is an uncharacterized protein from Saccharolobus solfataricus (strain ATCC 35092 / DSM 1617 / JCM 11322 / P2) (Sulfolobus solfataricus).